Consider the following 146-residue polypeptide: Hydroxyproline-rich systemin (146 aa).

A signal peptide spans Met1–Ala24. The propeptide occupies Arg25–Gly48. A disordered region spans residues Tyr47–Gln128. Pro51, Pro55, Pro56, Pro57, Pro58, and Pro63 each carry 4-hydroxyproline. Pro51, Pro55, Pro56, Pro57, Pro58, and Pro63 each carry an O-linked (Ara...) hydroxyproline glycan. Positions Glu67 to Asn70 are excised as a propeptide. 3 positions are modified to 4-hydroxyproline: Pro79, Pro80, and Pro82. O-linked (Ara...) hydroxyproline glycans are attached at residues Pro79, Pro80, and Pro82. A propeptide spanning residues Pro86–Gly110 is cleaved from the precursor. 4 positions are modified to 4-hydroxyproline: Pro119, Pro120, Pro121, and Pro122. Pro119, Pro120, Pro121, and Pro122 each carry an O-linked (Ara...) hydroxyproline glycan. A propeptide spanning residues Ile131–Tyr146 is cleaved from the precursor.

In terms of processing, O-glycosylated; contains pentose side chains. As to expression, leaves.

The protein localises to the secreted. Activates a lipid-based signal transduction pathway in which linolenic acid is converted to jasmonic acid, a potent activator of defense gene transcription. Induces synthesis of proteinase inhibitors I and II in leaves when supplied through cut stems. This Solanum lycopersicum (Tomato) protein is Hydroxyproline-rich systemin.